We begin with the raw amino-acid sequence, 180 residues long: MASTATNTDFFKTLLSPFSNGNAAQRSSRQNIVWLNRKQSGNNNRSLRVNGLFGGGKKDNKEDGQSKAGILGNMQNLYETVKKAQMVVQVEAVRVQKELAVAEFDGYCQGELVKVTLSGNQQPIRTDITDAAMELGSEKLSLLVTEAYKDAHSKSVLAMKERMSDLAQSLGMPPGLDGLK.

The transit peptide at 1–48 directs the protein to the chloroplast; sequence MASTATNTDFFKTLLSPFSNGNAAQRSSRQNIVWLNRKQSGNNNRSLR. A disordered region spans residues 45 to 65; the sequence is RSLRVNGLFGGGKKDNKEDGQ. The span at 56–65 shows a compositional bias: basic and acidic residues; sequence GKKDNKEDGQ.

The protein belongs to the YbaB/EbfC family. In terms of assembly, homodimer. Binds to the translation initiation factors TIF3E1.

It localises to the plastid. The protein resides in the chloroplast. In terms of biological role, binds to DNA and alters its conformation. May be involved in regulation of gene expression, nucleoid organization and DNA protection. This Arabidopsis thaliana (Mouse-ear cress) protein is Nucleoid-associated protein At4g30620, chloroplastic.